We begin with the raw amino-acid sequence, 586 residues long: GRB2-associated-binding protein 3 (586 aa).

The PH domain occupies 5–117 (DAVCTGWLVK…WVHSISQVCN (113 aa)). 2 disordered regions span residues 149-171 (AHAA…TEET) and 281-335 (SSTI…KKPE). A compositionally biased stretch (polar residues) spans 283-292 (TIQVDKNQGS). Over residues 316–326 (HLSERRQEEWS) the composition is skewed to basic and acidic residues. Phosphoserine is present on S344. The tract at residues 401–453 (GASGLGPHCSPDDYIPMNSGSISSPLPELPANLEPPPVNRDLKPQRKSRPPPL) is disordered. S482 is modified (phosphoserine).

This sequence belongs to the GAB family. Interacts with PIK3R/p85, SHP2 and GRAP2/MONA. May interact with Grb2. Post-translationally, phosphorylated on tyrosine residue(s) after macrophage colony-stimulating factor (M-CSF) receptor stimulation.

This Homo sapiens (Human) protein is GRB2-associated-binding protein 3 (GAB3).